The chain runs to 460 residues: Light-independent protochlorophyllide reductase subunit N (460 aa).

[4Fe-4S] cluster contacts are provided by Cys22, Cys47, and Cys107.

This sequence belongs to the BchN/ChlN family. In terms of assembly, protochlorophyllide reductase is composed of three subunits; ChlL, ChlN and ChlB. Forms a heterotetramer of two ChlB and two ChlN subunits. [4Fe-4S] cluster is required as a cofactor.

It carries out the reaction chlorophyllide a + oxidized 2[4Fe-4S]-[ferredoxin] + 2 ADP + 2 phosphate = protochlorophyllide a + reduced 2[4Fe-4S]-[ferredoxin] + 2 ATP + 2 H2O. The protein operates within porphyrin-containing compound metabolism; chlorophyll biosynthesis (light-independent). In terms of biological role, component of the dark-operative protochlorophyllide reductase (DPOR) that uses Mg-ATP and reduced ferredoxin to reduce ring D of protochlorophyllide (Pchlide) to form chlorophyllide a (Chlide). This reaction is light-independent. The NB-protein (ChlN-ChlB) is the catalytic component of the complex. This is Light-independent protochlorophyllide reductase subunit N from Thermosynechococcus vestitus (strain NIES-2133 / IAM M-273 / BP-1).